The following is a 90-amino-acid chain: Large ribosomal subunit protein bL27 (90 aa).

The disordered stretch occupies residues 1–22 (MAHKKSGGSSSNGRDSAGRRLG).

It belongs to the bacterial ribosomal protein bL27 family.

The chain is Large ribosomal subunit protein bL27 from Caulobacter sp. (strain K31).